The sequence spans 130 residues: UPF0102 protein SCO5602 (130 aa).

The protein belongs to the UPF0102 family.

This is UPF0102 protein SCO5602 from Streptomyces coelicolor (strain ATCC BAA-471 / A3(2) / M145).